We begin with the raw amino-acid sequence, 263 residues long: MWELRSASFWRAIFAEFFATLFYVFFGLGSSLRWAPGPLHVLQVAMAFGLALATLVQSVGHISGAHVNPAVTFAFLVGSQMSLLRAFCYMAAQLLGAVAGAAVLYSVTPPAVRGNLALNTLHPAVSVGQATTVEIFLTLQFVLCIFATYDERRNGQLGSVALAVGFSLALGHLFGMYYTGAGMNPARSFAPAILTGNFTNHWVYWVGPIIGGGLGSLLYDFLLFPRLKSISERLSVLKGAKPDVSNGQPEVTGEPVELNTQAL.

Residues 1–9 (MWELRSASF) are Cytoplasmic-facing. A helical membrane pass occupies residues 10-29 (WRAIFAEFFATLFYVFFGLG). At 30-41 (SSLRWAPGPLHV) the chain is on the extracellular side. Residues 42–59 (LQVAMAFGLALATLVQSV) form a helical membrane-spanning segment. At 60–61 (GH) the chain is on the cytoplasmic side. Residues 62–77 (ISGAHVNPAVTFAFLV) constitute an intramembrane region (discontinuously helical). The NPA 1 motif lies at 68–70 (NPA). Topologically, residues 78 to 82 (GSQMS) are cytoplasmic. The chain crosses the membrane as a helical span at residues 83 to 106 (LLRAFCYMAAQLLGAVAGAAVLYS). Residues 107–127 (VTPPAVRGNLALNTLHPAVSV) lie on the Extracellular side of the membrane. Residues 128–148 (GQATTVEIFLTLQFVLCIFAT) traverse the membrane as a helical segment. Residues 149 to 156 (YDERRNGQ) are Cytoplasmic-facing. A helical membrane pass occupies residues 157 to 175 (LGSVALAVGFSLALGHLFG). Residues 176–178 (MYY) lie on the Extracellular side of the membrane. An intramembrane region (discontinuously helical) is located at residues 179 to 193 (TGAGMNPARSFAPAI). Residues 184 to 186 (NPA) carry the NPA 2 motif. Topologically, residues 194 to 200 (LTGNFTN) are extracellular. The helical transmembrane segment at 201 to 222 (HWVYWVGPIIGGGLGSLLYDFL) threads the bilayer. Over 223 to 263 (LFPRLKSISERLSVLKGAKPDVSNGQPEVTGEPVELNTQAL) the chain is Cytoplasmic. Positions 227-237 (LKSISERLSVL) are interaction with CALM. Ser-235 and Ser-245 each carry phosphoserine. Deamidated asparagine; by deterioration is present on residues Asn-246 and Asn-259.

Belongs to the MIP/aquaporin (TC 1.A.8) family. Homotetramer; each monomer provides an independent water pore. Two homotetramers on opposing membranes can dimerize, forming a cell-cell junction. Interacts with CALM; the calcium-calmodulin/CALM complex interacts with the cytoplasmic domains of two aquaporins, leading to channel closure. Interacts with BFSP1 (via C-terminus); prevents calcium-dependent inhibition of the water channel activity. Post-translationally, subject to partial proteolytic cleavage in the eye lens core. Partial proteolysis promotes interactions between tetramers from adjoining membranes. Fatty acylated at Met-1 and Lys-238. The acyl modifications, in decreasing order of ion abundance, are: oleoyl (C18:1) &gt; palmitoyl (C16:0) &gt; stearoyl (C18:0) &gt; eicosenoyl (C20:1) &gt; dihomo-gamma-linolenoyl (C20:3) &gt; palmitoleoyl (C16:1) &gt; eicosadienoyl (C20:2). As to expression, expressed in the cortex and nucleus of the retina lens (at protein level). Major component of lens fiber gap junctions.

It is found in the cell membrane. The protein resides in the cell junction. It catalyses the reaction H2O(in) = H2O(out). The water channel activity is inhibited by calcium through calmodulin/CALM. In terms of biological role, aquaporins form homotetrameric transmembrane channels, with each monomer independently mediating water transport across the plasma membrane along its osmotic gradient. Specifically expressed in lens fiber cells, this aquaporin is crucial for maintaining lens water homeostasis and transparency. Beyond water permeability, it also acts as a cell-to-cell adhesion molecule, forming thin junctions between lens fiber cells that are essential for maintaining the ordered structure and transparency of the lens. The polypeptide is Lens fiber major intrinsic protein (Homo sapiens (Human)).